Consider the following 398-residue polypeptide: 1-deoxy-D-xylulose 5-phosphate reductoisomerase (398 aa).

T10, G11, S12, V13, G36, K37, N38, and N124 together coordinate NADPH. K125 contacts 1-deoxy-D-xylulose 5-phosphate. Residue E126 participates in NADPH binding. Residue D150 participates in Mn(2+) binding. S151, E152, S186, and H209 together coordinate 1-deoxy-D-xylulose 5-phosphate. E152 is a binding site for Mn(2+). G215 contributes to the NADPH binding site. Residues S222, N227, K228, and E231 each contribute to the 1-deoxy-D-xylulose 5-phosphate site. E231 provides a ligand contact to Mn(2+).

This sequence belongs to the DXR family. In terms of assembly, homodimer. The cofactor is Mg(2+). It depends on Mn(2+) as a cofactor.

It catalyses the reaction 2-C-methyl-D-erythritol 4-phosphate + NADP(+) = 1-deoxy-D-xylulose 5-phosphate + NADPH + H(+). It participates in isoprenoid biosynthesis; isopentenyl diphosphate biosynthesis via DXP pathway; isopentenyl diphosphate from 1-deoxy-D-xylulose 5-phosphate: step 1/6. Catalyzes the NADPH-dependent rearrangement and reduction of 1-deoxy-D-xylulose-5-phosphate (DXP) to 2-C-methyl-D-erythritol 4-phosphate (MEP). This chain is 1-deoxy-D-xylulose 5-phosphate reductoisomerase, found in Photorhabdus laumondii subsp. laumondii (strain DSM 15139 / CIP 105565 / TT01) (Photorhabdus luminescens subsp. laumondii).